An 897-amino-acid polypeptide reads, in one-letter code: 3'-5' exonuclease DinG (897 aa).

An Exonuclease domain is found at 8–161 (VVDLETTGNQ…DEDAATTAKL (154 aa)). The Helicase ATP-binding domain occupies 241-496 (SKAVDQLGLT…KAIDQLEKQR (256 aa)). 276–283 (ASLGSGKS) contacts ATP. The short motif at 448–451 (DEAH) is the DEAH box element. Residues 703-893 (NIDEYVASIV…QFGKLLRQIQ (191 aa)) form the Helicase C-terminal domain.

Belongs to the helicase family. DinG subfamily. Type 2 sub-subfamily.

Its function is as follows. 3'-5' exonuclease. This Staphylococcus aureus (strain USA300) protein is 3'-5' exonuclease DinG.